A 533-amino-acid polypeptide reads, in one-letter code: Tyrosine/DOPA decarboxylase 3 (533 aa).

N6-(pyridoxal phosphate)lysine is present on lysine 319.

Belongs to the group II decarboxylase family. As to quaternary structure, homodimer. Requires pyridoxal 5'-phosphate as cofactor. In terms of tissue distribution, roots.

It carries out the reaction L-tyrosine + H(+) = tyramine + CO2. The enzyme catalyses L-dopa + H(+) = dopamine + CO2. It catalyses the reaction 5-hydroxy-L-tryptophan + H(+) = serotonin + CO2. In terms of biological role, marginally higher substrate specificity for L-DOPA over L-tyrosine. In Papaver somniferum (Opium poppy), this protein is Tyrosine/DOPA decarboxylase 3 (TYDC3).